Reading from the N-terminus, the 121-residue chain is Small ribosomal subunit protein uS13 (121 aa).

Positions 93–121 (RGLPMRGQRTRTNARTRKGPRKGAAALKK) are disordered.

This sequence belongs to the universal ribosomal protein uS13 family. In terms of assembly, part of the 30S ribosomal subunit. Forms a loose heterodimer with protein S19. Forms two bridges to the 50S subunit in the 70S ribosome.

Its function is as follows. Located at the top of the head of the 30S subunit, it contacts several helices of the 16S rRNA. In the 70S ribosome it contacts the 23S rRNA (bridge B1a) and protein L5 of the 50S subunit (bridge B1b), connecting the 2 subunits; these bridges are implicated in subunit movement. Contacts the tRNAs in the A and P-sites. The sequence is that of Small ribosomal subunit protein uS13 from Acidovorax ebreus (strain TPSY) (Diaphorobacter sp. (strain TPSY)).